A 23-amino-acid chain; its full sequence is Basic phospholipase A2 CTs-G6 (23 aa).

Requires Ca(2+) as cofactor. In terms of processing, contains 7 disulfide bonds. Expressed by the venom gland.

The protein localises to the secreted. It carries out the reaction a 1,2-diacyl-sn-glycero-3-phosphocholine + H2O = a 1-acyl-sn-glycero-3-phosphocholine + a fatty acid + H(+). Functionally, snake venom phospholipase A2 (PLA2) that induces local edema a few hours after injection (5-10 ug) in the hind paw. PLA2 catalyzes the calcium-dependent hydrolysis of the 2-acyl groups in 3-sn-phosphoglycerides. The polypeptide is Basic phospholipase A2 CTs-G6 (Trimeresurus stejnegeri (Chinese green tree viper)).